We begin with the raw amino-acid sequence, 224 residues long: PKHD-type hydroxylase Sbal_3634 (224 aa).

The region spanning 78-176 (QFYPPLFNRY…RTAAFMWLQS (99 aa)) is the Fe2OG dioxygenase domain. His-96, Asp-98, and His-157 together coordinate Fe cation. Arg-167 contacts 2-oxoglutarate.

Fe(2+) is required as a cofactor. L-ascorbate serves as cofactor.

The protein is PKHD-type hydroxylase Sbal_3634 of Shewanella baltica (strain OS155 / ATCC BAA-1091).